Reading from the N-terminus, the 616-residue chain is Large ribosomal subunit assembly factor BipA (616 aa).

Residues 8 to 204 enclose the tr-type G domain; it reads KKLRNIAIIA…AIVKHVEPPK (197 aa). Residues 20-25 and 134-137 contribute to the GTP site; these read DHGKTT and NKVD.

It belongs to the TRAFAC class translation factor GTPase superfamily. Classic translation factor GTPase family. BipA subfamily. Monomer.

It localises to the cytoplasm. It catalyses the reaction GTP + H2O = GDP + phosphate + H(+). In terms of biological role, a 50S ribosomal subunit assembly protein with GTPase activity, required for 50S subunit assembly at low temperatures, may also play a role in translation. Binds GTP and analogs. Binds the 70S ribosome between the 30S and 50S subunits, in a similar position as ribosome-bound EF-G; it contacts a number of ribosomal proteins, both rRNAs and the A-site tRNA. The polypeptide is Large ribosomal subunit assembly factor BipA (Haemophilus influenzae (strain ATCC 51907 / DSM 11121 / KW20 / Rd)).